The primary structure comprises 72 residues: UPF0150 protein jhp_0960 (72 aa).

Belongs to the UPF0150 family.

The sequence is that of UPF0150 protein jhp_0960 from Helicobacter pylori (strain J99 / ATCC 700824) (Campylobacter pylori J99).